We begin with the raw amino-acid sequence, 63 residues long: Large ribosomal subunit protein uL29 (63 aa).

It belongs to the universal ribosomal protein uL29 family.

The chain is Large ribosomal subunit protein uL29 from Listeria innocua serovar 6a (strain ATCC BAA-680 / CLIP 11262).